A 519-amino-acid polypeptide reads, in one-letter code: Probable cytosol aminopeptidase (519 aa).

Mn(2+)-binding residues include K283 and D288. The active site involves K295. The Mn(2+) site is built by D306, D365, and E367. R369 is a catalytic residue.

Belongs to the peptidase M17 family. Mn(2+) serves as cofactor.

The protein localises to the cytoplasm. It carries out the reaction Release of an N-terminal amino acid, Xaa-|-Yaa-, in which Xaa is preferably Leu, but may be other amino acids including Pro although not Arg or Lys, and Yaa may be Pro. Amino acid amides and methyl esters are also readily hydrolyzed, but rates on arylamides are exceedingly low.. It catalyses the reaction Release of an N-terminal amino acid, preferentially leucine, but not glutamic or aspartic acids.. In terms of biological role, presumably involved in the processing and regular turnover of intracellular proteins. Catalyzes the removal of unsubstituted N-terminal amino acids from various peptides. This Mycobacterium marinum (strain ATCC BAA-535 / M) protein is Probable cytosol aminopeptidase.